The following is a 334-amino-acid chain: Broad-range acid phosphatase DET1 (334 aa).

The active-site Tele-phosphohistidine intermediate is His32. Substrate contacts are provided by residues Asn38, 44–45, and Arg108; that span reads NG. Glu126 functions as the Proton donor/acceptor in the catalytic mechanism. Residues 168–171 and 195–205 each bind substrate; these read LNNT and RVKDEPRIREQ. Position 248 is a phosphoserine (Ser248).

Belongs to the phosphoglycerate mutase family.

It localises to the cytoplasm. The protein resides in the nucleus. In terms of biological role, metal-independent, broad-range acid phosphatase. Involved, either directly or indirectly, in the bidirectional transport of sterols between the endoplasmic reticulum and the plasma membrane. The chain is Broad-range acid phosphatase DET1 (DET1) from Saccharomyces cerevisiae (strain ATCC 204508 / S288c) (Baker's yeast).